Reading from the N-terminus, the 336-residue chain is Ankyrin repeat and SOCS box protein 1 (336 aa).

ANK repeat units follow at residues 37-69 (CDDT…RINE), 78-107 (LPCT…EVDL), 111-140 (KGQT…DPNG), 144-173 (HRST…DVDV), 192-221 (LVVC…NPDF), and 236-266 (SPGC…NLNL). One can recognise an SOCS box domain in the interval 287–336 (LQVFKEARSIPRTLLSLCRVAVRRALGKYRLHLVPSLPLPDPIKKFLLYE).

The protein belongs to the ankyrin SOCS box (ASB) family. As to quaternary structure, interacts with CUL5 and RNF7. As to expression, highest expression in testis, spleen, bone marrow and salivary gland.

It functions in the pathway protein modification; protein ubiquitination. In terms of biological role, probable substrate-recognition component of a SCF-like ECS (Elongin-Cullin-SOCS-box protein) E3 ligase complex which mediates the ubiquitination and subsequent proteasomal degradation of target proteins. Mediates Notch-induced ubiquitination and degradation of TCF3/E2A and JAK2. May play a role in testis development. This Mus musculus (Mouse) protein is Ankyrin repeat and SOCS box protein 1 (Asb1).